A 311-amino-acid polypeptide reads, in one-letter code: Pyrimidine-specific ribonucleoside hydrolase RihA (311 aa).

The active site involves histidine 240.

The protein belongs to the IUNH family. RihA subfamily.

Functionally, hydrolyzes cytidine or uridine to ribose and cytosine or uracil, respectively. This is Pyrimidine-specific ribonucleoside hydrolase RihA from Salmonella schwarzengrund (strain CVM19633).